The sequence spans 502 residues: 2,3-bisphosphoglycerate-independent phosphoglycerate mutase (502 aa).

2 residues coordinate Mn(2+): D13 and S63. Catalysis depends on S63, which acts as the Phosphoserine intermediate. Substrate is bound by residues H117, 146–147 (RD), R177, R183, 251–254 (RSDR), and K324. D389, H393, D430, H431, and H448 together coordinate Mn(2+).

This sequence belongs to the BPG-independent phosphoglycerate mutase family. As to quaternary structure, monomer. It depends on Mn(2+) as a cofactor.

The catalysed reaction is (2R)-2-phosphoglycerate = (2R)-3-phosphoglycerate. Its pathway is carbohydrate degradation; glycolysis; pyruvate from D-glyceraldehyde 3-phosphate: step 3/5. In terms of biological role, catalyzes the interconversion of 2-phosphoglycerate and 3-phosphoglycerate. This chain is 2,3-bisphosphoglycerate-independent phosphoglycerate mutase, found in Ureaplasma urealyticum serovar 10 (strain ATCC 33699 / Western).